Reading from the N-terminus, the 208-residue chain is Cytochrome c biogenesis ATP-binding export protein CcmA (208 aa).

The ABC transporter domain maps to 2–206 (LEAKELTCAR…IRLTAEGRDE (205 aa)). ATP is bound at residue 34–41 (GPNGAGKT).

It belongs to the ABC transporter superfamily. CcmA exporter (TC 3.A.1.107) family. The complex is composed of two ATP-binding proteins (CcmA) and two transmembrane proteins (CcmB).

Its subcellular location is the cell inner membrane. It catalyses the reaction heme b(in) + ATP + H2O = heme b(out) + ADP + phosphate + H(+). In terms of biological role, part of the ABC transporter complex CcmAB involved in the biogenesis of c-type cytochromes; once thought to export heme, this seems not to be the case, but its exact role is uncertain. Responsible for energy coupling to the transport system. The polypeptide is Cytochrome c biogenesis ATP-binding export protein CcmA (Tatumella citrea (Pantoea citrea)).